Here is a 368-residue protein sequence, read N- to C-terminus: RNA polymerase sigma factor SigA (368 aa).

The interval 69 to 90 (LVNEKDSSDTDEKLNPSDLSAP) is disordered. Over residues 71–83 (NEKDSSDTDEKLN) the composition is skewed to basic and acidic residues. Positions 135-205 (LAEANLRLVV…TRAIADQART (71 aa)) are sigma-70 factor domain-2. Residues 159–162 (DLIQ) carry the Interaction with polymerase core subunit RpoC motif. The sigma-70 factor domain-3 stretch occupies residues 214 to 290 (ETINKLIRVQ…DQEAQSPSDH (77 aa)). The tract at residues 303-356 (VLDTLTDREENVLRLRFGLDDGRTRTLEEVGKVFGVTRERIRQIEAKALRKLRH) is sigma-70 factor domain-4. The H-T-H motif DNA-binding region spans 329–348 (LEEVGKVFGVTRERIRQIEA).

It belongs to the sigma-70 factor family. RpoD/SigA subfamily. In terms of assembly, interacts transiently with the RNA polymerase catalytic core.

It localises to the cytoplasm. In terms of biological role, sigma factors are initiation factors that promote the attachment of RNA polymerase to specific initiation sites and are then released. This sigma factor is the primary sigma factor during exponential growth. In Staphylococcus aureus (strain N315), this protein is RNA polymerase sigma factor SigA.